A 181-amino-acid polypeptide reads, in one-letter code: Inner membrane-spanning protein YciB (181 aa).

5 helical membrane passes run 22 to 42 (IYTA…LTYV), 50 to 70 (MQLI…FLHD), 80 to 100 (IVYA…RPII), 118 to 138 (INYA…YVAF), and 148 to 168 (FKVF…GMYV).

It belongs to the YciB family.

It localises to the cell inner membrane. Its function is as follows. Plays a role in cell envelope biogenesis, maintenance of cell envelope integrity and membrane homeostasis. The protein is Inner membrane-spanning protein YciB of Aliivibrio salmonicida (strain LFI1238) (Vibrio salmonicida (strain LFI1238)).